We begin with the raw amino-acid sequence, 337 residues long: GTP 3',8-cyclase (337 aa).

In terms of domain architecture, Radical SAM core spans 17 to 243; it reads PFQRQYYYLR…HKSHTDGPAK (227 aa). GTP is bound at residue R26. Residues C33 and C37 each coordinate [4Fe-4S] cluster. Y39 contacts S-adenosyl-L-methionine. C40 is a [4Fe-4S] cluster binding site. GTP is bound at residue R76. Residue G80 coordinates S-adenosyl-L-methionine. Residue T107 participates in GTP binding. S131 serves as a coordination point for S-adenosyl-L-methionine. K168 provides a ligand contact to GTP. M202 lines the S-adenosyl-L-methionine pocket. The [4Fe-4S] cluster site is built by C265 and C268. Position 270–272 (270–272) interacts with GTP; it reads RLR. A [4Fe-4S] cluster-binding site is contributed by C282.

It belongs to the radical SAM superfamily. MoaA family. As to quaternary structure, monomer and homodimer. [4Fe-4S] cluster serves as cofactor.

The enzyme catalyses GTP + AH2 + S-adenosyl-L-methionine = (8S)-3',8-cyclo-7,8-dihydroguanosine 5'-triphosphate + 5'-deoxyadenosine + L-methionine + A + H(+). The protein operates within cofactor biosynthesis; molybdopterin biosynthesis. Its function is as follows. Catalyzes the cyclization of GTP to (8S)-3',8-cyclo-7,8-dihydroguanosine 5'-triphosphate. The protein is GTP 3',8-cyclase of Haemophilus influenzae (strain ATCC 51907 / DSM 11121 / KW20 / Rd).